Consider the following 443-residue polypeptide: Nuclear hormone receptor family member nhr-60 (443 aa).

A compositionally biased stretch (low complexity) spans 1–20 (MIQSSSSISQDSLDLPSILS). The segment at 1-40 (MIQSSSSISQDSLDLPSILSTFSADEPEDEPSPTAVKSTK) is disordered. The nuclear receptor DNA-binding region spans 44–121 (PTECLICGNS…VGMNPLAMEV (78 aa)). NR C4-type zinc fingers lie at residues 47–67 (CLIC…CNGC) and 83–104 (CKAK…CRAC). The region spanning 196–439 (NEFSGLEYLL…KDLVMRVIED (244 aa)) is the NR LBD domain. Positions 225–249 (LRRDQLGPPRLPKPPSPGKPRDSQH) are disordered. The segment covering 233-242 (PRLPKPPSPG) has biased composition (pro residues).

Belongs to the nuclear hormone receptor family.

The protein localises to the nucleus. Functionally, orphan nuclear receptor (Potential). Required for embryonic and larval morphogenesis and probably for seam cell positioning and migration. The protein is Nuclear hormone receptor family member nhr-60 of Caenorhabditis elegans.